Here is a 252-residue protein sequence, read N- to C-terminus: Adenosylcobinamide-GDP ribazoletransferase (252 aa).

The next 6 membrane-spanning stretches (helical) occupy residues 29–49 (LYWFPFVGLLLGALLAALGYV), 50–70 (GSLSGWHEFAALLVVLGGIVL), 104–124 (VGSFGALALSGVMLLKWVAVV), 129–149 (FGLFDVVMAGILLARLVQVLL), 166–186 (FVAGAGAPHAFSALLFTLALL), and 194–214 (FPTMLWLLGAALVAGSMVGMV).

The protein belongs to the CobS family. It depends on Mg(2+) as a cofactor.

It is found in the cell inner membrane. It carries out the reaction alpha-ribazole + adenosylcob(III)inamide-GDP = adenosylcob(III)alamin + GMP + H(+). It catalyses the reaction alpha-ribazole 5'-phosphate + adenosylcob(III)inamide-GDP = adenosylcob(III)alamin 5'-phosphate + GMP + H(+). Its pathway is cofactor biosynthesis; adenosylcobalamin biosynthesis; adenosylcobalamin from cob(II)yrinate a,c-diamide: step 7/7. Functionally, joins adenosylcobinamide-GDP and alpha-ribazole to generate adenosylcobalamin (Ado-cobalamin). Also synthesizes adenosylcobalamin 5'-phosphate from adenosylcobinamide-GDP and alpha-ribazole 5'-phosphate. This chain is Adenosylcobinamide-GDP ribazoletransferase, found in Chlorobium chlorochromatii (strain CaD3).